Here is a 591-residue protein sequence, read N- to C-terminus: V-type ATP synthase alpha chain (591 aa).

An ATP-binding site is contributed by 233-240 (GPFGAGKT).

Belongs to the ATPase alpha/beta chains family.

It catalyses the reaction ATP + H2O + 4 H(+)(in) = ADP + phosphate + 5 H(+)(out). In terms of biological role, produces ATP from ADP in the presence of a proton gradient across the membrane. The V-type alpha chain is a catalytic subunit. The sequence is that of V-type ATP synthase alpha chain from Streptococcus pneumoniae serotype 19F (strain G54).